The following is a 155-amino-acid chain: Antitoxin HicB 1 (155 aa).

In terms of domain architecture, HTH cro/C1-type spans 99–153 (MLNAFLDSKLTQIELANRMGVKKQEVTRIFDLRHSTKIDTVGKVASAIGHQLTLS). Residues 110 to 129 (QIELANRMGVKKQEVTRIFD) constitute a DNA-binding region (H-T-H motif).

Belongs to the HicB antitoxin family. Probably forms a complex with the probable mRNA interferase HicA1 (its cognate toxin); when complexed with HicA 1 inhibits the toxin activity.

Its function is as follows. Antitoxin component of a type II toxin-antitoxin (TA) system. Functions as an mRNA interferase antitoxin preventing effects of the HicA 1 toxin. The chain is Antitoxin HicB 1 (hicB1) from Photorhabdus laumondii subsp. laumondii (strain DSM 15139 / CIP 105565 / TT01) (Photorhabdus luminescens subsp. laumondii).